The following is a 120-amino-acid chain: Large ribosomal subunit protein bL20 (120 aa).

The protein belongs to the bacterial ribosomal protein bL20 family.

Functionally, binds directly to 23S ribosomal RNA and is necessary for the in vitro assembly process of the 50S ribosomal subunit. It is not involved in the protein synthesizing functions of that subunit. The protein is Large ribosomal subunit protein bL20 of Cereibacter sphaeroides (strain ATCC 17029 / ATH 2.4.9) (Rhodobacter sphaeroides).